A 3232-amino-acid chain; its full sequence is D-lysergyl-peptide-synthetase subunit 1 (3232 aa).

The interval 90-474 (GCLTYDEMSI…LGRKDDQVKI (385 aa)) is adenylation (A) domain 1. Residues 617-686 (REKLLQGCFA…TLREIVIVST (70 aa)) enclose the Carrier 1 domain. Ser-649 carries the O-(pantetheine 4'-phosphoryl)serine modification. The interval 731 to 1122 (EDIYPCTHLQ…EHILTQIHSN (392 aa)) is condensation (C) domain 1. The adenylation (A) domain 2 stretch occupies residues 1165–1572 (QAKCQAQPDA…RRKDAQVKIR (408 aa)). The region spanning 1717-1785 (TEHEISAIWA…TIRKLALARG (69 aa)) is the Carrier 2 domain. Ser-1749 carries the O-(pantetheine 4'-phosphoryl)serine modification. The segment at 1835–2252 (ERIYPCSPIQ…ALPVLDEDQM (418 aa)) is condensation (C) domain 2. The tract at residues 2276-2675 (QQCLRCPDSP…GRNDDQVKVR (400 aa)) is adenylation (A) domain 3. The region spanning 2810–2878 (MEAELQRLVG…RVSDLARIVE (69 aa)) is the Carrier 3 domain. Position 2842 is an O-(pantetheine 4'-phosphoryl)serine (Ser-2842). The interval 2943–3218 (LYFSKPVASE…LLHWLHQQHI (276 aa)) is cyclization (Cyc) domain.

Belongs to the NRP synthetase family.

The protein operates within alkaloid biosynthesis; ergot alkaloid biosynthesis. Functionally, D-lysergyl-peptide-synthetase subunit 1; part of the gene cluster that mediates the biosynthesis of fungal ergot alkaloid. DmaW catalyzes the first step of ergot alkaloid biosynthesis by condensing dimethylallyl diphosphate (DMAP) and tryptophan to form 4-dimethylallyl-L-tryptophan. The second step is catalyzed by the methyltransferase easF that methylates 4-dimethylallyl-L-tryptophan in the presence of S-adenosyl-L-methionine, resulting in the formation of 4-dimethylallyl-L-abrine. The catalase easC and the FAD-dependent oxidoreductase easE then transform 4-dimethylallyl-L-abrine to chanoclavine-I which is further oxidized by easD in the presence of NAD(+), resulting in the formation of chanoclavine-I aldehyde. Agroclavine dehydrogenase easG then mediates the conversion of chanoclavine-I aldehyde to agroclavine via a non-enzymatic adduct reaction: the substrate is an iminium intermediate that is formed spontaneously from chanoclavine-I aldehyde in the presence of glutathione. The presence of easA is not required to complete this reaction. Further conversion of agroclavine to paspalic acid is a two-step process involving oxidation of agroclavine to elymoclavine and of elymoclavine to paspalic acid, the second step being performed by the elymoclavine oxidase cloA. Paspalic acid is then further converted to D-lysergic acid. Ergopeptines are assembled from D-lysergic acid and three different amino acids by the D-lysergyl-peptide-synthetases composed each of a monomudular and a trimodular nonribosomal peptide synthetase subunit. LpsB and lpsC encode the monomodular subunits responsible for D-lysergic acid activation and incorporation into the ergopeptine backbone. LpsA1 and A2 subunits encode the trimodular nonribosomal peptide synthetase assembling the tripeptide portion of ergopeptines. LpsA1 is responsible for formation of the major ergopeptine, ergotamine, and lpsA2 for alpha-ergocryptine, the minor ergopeptine of the total alkaloid mixture elaborated by C.purpurea. D-lysergyl-tripeptides are assembled by the nonribosomal peptide synthetases and released as N-(D-lysergyl-aminoacyl)-lactams. Cyclolization of the D-lysergyl-tripeptides is performed by the Fe(2+)/2-ketoglutarate-dependent dioxygenase easH which introduces a hydroxyl group into N-(D-lysergyl-aminoacyl)-lactam at alpha-C of the aminoacyl residue followed by spontaneous condensation with the terminal lactam carbonyl group. The protein is D-lysergyl-peptide-synthetase subunit 1 of Claviceps purpurea (Ergot fungus).